Here is a 325-residue protein sequence, read N- to C-terminus: Casein kinase I isoform alpha (325 aa).

Ala2 carries the post-translational modification N-acetylalanine. The residue at position 4 (Ser4) is a Phosphoserine. Lys8 bears the N6-acetyllysine mark. The region spanning 17-285 (YKLVRKIGSG…YLRQLFRILF (269 aa)) is the Protein kinase domain. ATP contacts are provided by residues 23–31 (IGSGSFGDI) and Lys46. The Proton acceptor role is filled by Asp136.

Belongs to the protein kinase superfamily. CK1 Ser/Thr protein kinase family. Casein kinase I subfamily. As to quaternary structure, interacts with the Axin complex. Interacts with TUT1, leading to TUT1 phosphorylation. Interacts with FAM83A, FAM83B, FAM83C, FAM83D, FAM83E, FAM83F, FAM83G and FAM83H (via DUF1669). Interaction with FAM83H recruits CSNK1A1 to keratin filaments. Post-translationally, phosphorylated by MTOR in response to mitogenic stimulation, leading to its activation.

The protein localises to the cytoplasm. It is found in the cytoskeleton. It localises to the microtubule organizing center. Its subcellular location is the centrosome. The protein resides in the chromosome. The protein localises to the centromere. It is found in the kinetochore. It localises to the nucleus speckle. Its subcellular location is the cilium basal body. The protein resides in the spindle. It carries out the reaction L-seryl-[protein] + ATP = O-phospho-L-seryl-[protein] + ADP + H(+). The enzyme catalyses L-threonyl-[protein] + ATP = O-phospho-L-threonyl-[protein] + ADP + H(+). Its function is as follows. Casein kinases are operationally defined by their preferential utilization of acidic proteins such as caseins as substrates. Can phosphorylate a large number of proteins. Participates in Wnt signaling. Phosphorylates CTNNB1 at 'Ser-45'. May phosphorylate PER1 and PER2. May play a role in segregating chromosomes during mitosis. May play a role in keratin cytoskeleton disassembly and thereby, it may regulate epithelial cell migration. Acts as a positive regulator of mTORC1 and mTORC2 signaling in response to nutrients by mediating phosphorylation of DEPTOR inhibitor. Acts as an inhibitor of NLRP3 inflammasome assembly by mediating phosphorylation of NLRP3. The sequence is that of Casein kinase I isoform alpha (CSNK1A1) from Oryctolagus cuniculus (Rabbit).